Consider the following 358-residue polypeptide: MQGTGHPVRPVLELLLLLLLLAGVGGSTTASTPGPPLFNVSLDVAPERWLPVLRHYDVELVRAAVAQVIGDRVPKWVLALIEKGALKLERLLPPPFTAEIRGMCDFLNLSLADGLLVNLAYEYSAFCTSIVAQDSRGHVYHGRNLDYPYGSILRKLTVDVQFLKNGQIAFTGTTFIGYVGLWTGQSPHKFTVSGDERDRGWWWENLVAALFLRHSPISWLLRTTLSEAESFEAAVYRLAKTPLIADVYYIVGGTNPREGVVITRNRDGPADIWPLDPLKGVWFLVETNYDHWKPAPEEDDRRTPAIKALNATGQAKLSLETLFQVLSVVPVYNNYTIYTTVMSAASPDKYMTRIRNPS.

Residues 1 to 26 (MQGTGHPVRPVLELLLLLLLLAGVGG) form the signal peptide. Asn39 and Asn108 each carry an N-linked (GlcNAc...) asparagine glycan. Residue Cys127 is the Nucleophile of the active site. Residues Asn310, Asn334, and Asn356 are each glycosylated (N-linked (GlcNAc...) asparagine).

Belongs to the acid ceramidase family. As to quaternary structure, heterodimer of an alpha and a beta subunit, produced by autocatalytic cleavage. In terms of processing, N-glycosylated. Tunicamycin treatment causes a reduction in specific activity against N-palmitoylethanolamine. Post-translationally, autoproteolytic cleavage at pH 4.5 gives rise to the alpha and beta subunit. Cleavage gives rise to a conformation change that activates the enzyme. The same catalytic Cys residue mediates the autoproteolytic cleavage and subsequent hydrolysis of lipid substrates.

The protein localises to the lysosome. Its subcellular location is the membrane. It catalyses the reaction N-hexadecanoylethanolamine + H2O = ethanolamine + hexadecanoate. The enzyme catalyses an N-(long-chain fatty acyl)ethanolamine + H2O = a long-chain fatty acid + ethanolamine. It carries out the reaction N-dodecanoylethanolamine + H2O = dodecanoate + ethanolamine. The catalysed reaction is N-tetradecanoylethanolamine + H2O = tetradecanoate + ethanolamine. It catalyses the reaction an N-acylsphing-4-enine + H2O = sphing-4-enine + a fatty acid. The enzyme catalyses N-hexadecanoylsphing-4-enine + H2O = sphing-4-enine + hexadecanoate. It carries out the reaction N-dodecanoylsphing-4-enine + H2O = dodecanoate + sphing-4-enine. The protein operates within lipid metabolism; fatty acid metabolism. Degrades bioactive fatty acid amides to their corresponding acids, with the following preference: N-palmitoylethanolamine &gt; N-myristoylethanolamine &gt; N-stearoylethanolamine &gt; N-oleoylethanolamine &gt; N-linoleoylethanolamine &gt; N-arachidonoylethanolamine. This chain is N-acylethanolamine-hydrolyzing acid amidase, found in Oryctolagus cuniculus (Rabbit).